Reading from the N-terminus, the 353-residue chain is GTPase Obg (353 aa).

The 159-residue stretch at 1–159 folds into the Obg domain; sequence MKFLDEAKVY…RWIWLRLKLI (159 aa). Residues 160 to 327 enclose the OBG-type G domain; it reads ADAGLVGLPN…ALRALAAVIG (168 aa). Residues 166 to 173, 191 to 195, 212 to 215, 279 to 282, and 308 to 310 contribute to the GTP site; these read GLPNAGKS, FTTLH, DIPG, NKID, and SGI. Positions 173 and 193 each coordinate Mg(2+). Residues 332–353 form a disordered region; the sequence is SDKAKGAADNAANAEPWAPQDA.

This sequence belongs to the TRAFAC class OBG-HflX-like GTPase superfamily. OBG GTPase family. Monomer. Mg(2+) serves as cofactor.

Its subcellular location is the cytoplasm. Its function is as follows. An essential GTPase which binds GTP, GDP and possibly (p)ppGpp with moderate affinity, with high nucleotide exchange rates and a fairly low GTP hydrolysis rate. Plays a role in control of the cell cycle, stress response, ribosome biogenesis and in those bacteria that undergo differentiation, in morphogenesis control. The sequence is that of GTPase Obg from Rhodopseudomonas palustris (strain HaA2).